Consider the following 216-residue polypeptide: uncharacterized protein (216 aa).

This is an uncharacterized protein from Archaeoglobus fulgidus (strain ATCC 49558 / DSM 4304 / JCM 9628 / NBRC 100126 / VC-16).